Here is a 202-residue protein sequence, read N- to C-terminus: Small ribosomal subunit protein uS2 (202 aa).

Belongs to the universal ribosomal protein uS2 family.

This Pyrococcus horikoshii (strain ATCC 700860 / DSM 12428 / JCM 9974 / NBRC 100139 / OT-3) protein is Small ribosomal subunit protein uS2 (rps2).